The sequence spans 375 residues: Sulfite efflux pump SSU1 (375 aa).

Residues 1–25 lie on the Cytoplasmic side of the membrane; sequence MPSGSGFHNIEEAGEKARKRDDWIA. A helical transmembrane segment spans residues 26–46; the sequence is ISNFHPGWFSVNMGTGITAIL. The Extracellular segment spans residues 47 to 59; that stretch reads LQNLPYQFPGLHY. A helical transmembrane segment spans residues 60–80; sequence IAVVLFILNVIIFFLFLTISI. The Cytoplasmic portion of the chain corresponds to 81-101; that stretch reads TRYCLWPDKFKAMLAHPAHSM. The helical transmembrane segment at 102-122 threads the bilayer; sequence LLGTFPMGFATIINCIVFICV. Over 123 to 135 the chain is Extracellular; sequence PVWGEWASRFAWG. A helical transmembrane segment spans residues 136–156; it reads LWWIDAAVSVAICYFVPFMLM. Topologically, residues 157 to 167 are cytoplasmic; that stretch reads TKHTSSLETMT. Residues 168-188 traverse the membrane as a helical segment; it reads AAWLLPIVAPVVAAASGGVVA. The Extracellular portion of the chain corresponds to 189 to 200; the sequence is DSLQNDTHALIT. Asparagine 193 is a glycosylation site (N-linked (GlcNAc...) asparagine). A helical membrane pass occupies residues 201–221; that stretch reads ILVCYAMWGSAVPLAMVILVI. The Cytoplasmic portion of the chain corresponds to 222–234; sequence YFQRLAIHKLVPR. Residues 235-255 form a helical membrane-spanning segment; it reads AAIVSALLPIGPLGQGGFGLM. Residues 256–277 lie on the Extracellular side of the membrane; sequence QLGVVAKRVFPRLDFLAPIAGD. Residues 278-298 form a helical membrane-spanning segment; the sequence is IFYVMGAFIAMIMWGFGLIWL. Residues 299-309 are Cytoplasmic-facing; that stretch reads WFALASFTRGK. The helical transmembrane segment at 310–330 threads the bilayer; sequence FYFNIGWWAFTFPLGVFTTAT. The Extracellular segment spans residues 331–343; sequence TQMGKEFNSPFFD. The helical transmembrane segment at 344-364 threads the bilayer; that stretch reads ILGTFFSIVVTCMWVLVFALT. Residues 365-375 are Cytoplasmic-facing; sequence VYKSCTKELFR.

This sequence belongs to the tellurite-resistance/dicarboxylate transporter (TDT) family.

It localises to the cell membrane. Its function is as follows. Sulphite efflux pump required for the secretion of sulphite as a reducing agent. In the presence of sulphite, cystine in keratin is directly cleaved to cysteine and S-sulphocysteine, and thereby, reduced proteins become accessible to hydrolysis by a variety of secreted endo- and exoproteases. Excretion of sulphite mediated by an efflux pump also represents a detoxification pathway for dermatophytes during infection of the epidermal stratum corneum, hair and nails, which are rich in cysteine. This chain is Sulfite efflux pump SSU1 (SSU1), found in Trichophyton rubrum (Athlete's foot fungus).